We begin with the raw amino-acid sequence, 423 residues long: Galactosylceramide sulfotransferase (423 aa).

The Cytoplasmic segment spans residues 1-14 (MPLPQKKRWESMAK). Residues 15-35 (GLVLGALFTSFLLLLYSYAVP) traverse the membrane as a helical; Signal-anchor for type II membrane protein segment. At 36-423 (PLYTGLASTT…WKFIRDFLRW (388 aa)) the chain is on the lumenal side. Positions 48–70 (GAAPCSPAPREPEAPTSANGSAG) are disordered. Asparagine 66, asparagine 156, and asparagine 312 each carry an N-linked (GlcNAc...) asparagine glycan.

This sequence belongs to the galactose-3-O-sulfotransferase family.

It localises to the golgi apparatus membrane. It catalyses the reaction a beta-D-galactosyl-(1&lt;-&gt;1')-N-acylsphing-4-enine + 3'-phosphoadenylyl sulfate = an N-acyl-1-beta-D-(3-O-sulfo)-galactosyl-sphing-4-enine + adenosine 3',5'-bisphosphate + H(+). It carries out the reaction a 1-O-alkyl-2-acyl-3-O-(beta-D-galactosyl)-sn-glycerol + 3'-phosphoadenylyl sulfate = a 1-O-alkyl-2-acyl-3-(beta-D-3-sulfogalactosyl)-sn-glycerol + adenosine 3',5'-bisphosphate + H(+). The catalysed reaction is a beta-D-Gal-(1&lt;-&gt;1')-ceramide + 3'-phosphoadenylyl sulfate = 1-(3-O-sulfo-beta-D-galactosyl)-ceramide + adenosine 3',5'-bisphosphate + H(+). The enzyme catalyses a 1,2-diacyl-3-O-(beta-D-galactosyl)-sn-glycerol + 3'-phosphoadenylyl sulfate = 1,2-diacyl-3-(3-O-sulfo-beta-D-galactosyl)-sn-glycerol + adenosine 3',5'-bisphosphate + H(+). It catalyses the reaction a beta-D-Gal-(1-&gt;4)-beta-D-Glc-(1&lt;-&gt;1)-Cer(d18:1(4E)) + 3'-phosphoadenylyl sulfate = beta-D-3-sulfogalactosyl-(1-&gt;4)-beta-D-glucosyl-(1&lt;-&gt;1')-N-acylsphing-4-enine + adenosine 3',5'-bisphosphate + H(+). The protein operates within lipid metabolism; sphingolipid metabolism. Its function is as follows. Catalyzes the transfer of a sulfate group to position 3 of non-reducing beta-galactosyl residues in glycerolipids and sphingolipids, therefore participates in the biosynthesis of sulfoglycolipids. Catalyzes the synthesis of galactosylceramide sulfate (sulfatide), a major lipid component of the myelin sheath and of monogalactosylalkylacylglycerol sulfate (seminolipid), present in spermatocytes. Seems to prefer beta-glycosides at the non-reducing termini of sugar chains attached to a lipid moiety. Also acts on lactosylceramide, galactosyl 1-alkyl-2-sn-glycerol and galactosyl diacylglycerol (in vitro). In Bos taurus (Bovine), this protein is Galactosylceramide sulfotransferase.